A 164-amino-acid polypeptide reads, in one-letter code: UPF0304 protein ECA3037 (164 aa).

Belongs to the UPF0304 family.

The protein is UPF0304 protein ECA3037 of Pectobacterium atrosepticum (strain SCRI 1043 / ATCC BAA-672) (Erwinia carotovora subsp. atroseptica).